Reading from the N-terminus, the 309-residue chain is (S)-sulfolactate dehydrogenase (309 aa).

NAD(+)-binding positions include 151–152 (GI), aspartate 171, 231–233 (TAR), and aspartate 257. Arginine 233 is an active-site residue. Glutamate 262 is an active-site residue. Histidine 281 functions as the Proton donor in the catalytic mechanism. 281 to 284 (HIAG) is a binding site for NAD(+).

It belongs to the D-isomer specific 2-hydroxyacid dehydrogenase family.

The catalysed reaction is (2S)-3-sulfolactate + NAD(+) = 3-sulfopyruvate + NADH + H(+). In terms of biological role, dehydrogenase of the (R,S)-sulfolactate degradation pathway that only acts on the (S)-enantiomer of 3-sulfolactate. Together with ComC, provides a racemase system that converts (2S)-3-sulfolactate to (2R)-3-sulfolactate, which is degraded further by (2R)-sulfolactate sulfo-lyase. Specific for NAD. Also able to form sulfolactate from sulfopyruvate. The sequence is that of (S)-sulfolactate dehydrogenase (slcC) from Chromohalobacter salexigens (strain ATCC BAA-138 / DSM 3043 / CIP 106854 / NCIMB 13768 / 1H11).